Here is a 154-residue protein sequence, read N- to C-terminus: Small ribosomal subunit protein bS6 (154 aa).

A disordered region spans residues 107-154 (KSDDRERGFRGPKPPGRFESGRKRGYDDREEFRARAGGDDDDRGLDQE). The segment covering 125–154 (ESGRKRGYDDREEFRARAGGDDDDRGLDQE) has biased composition (basic and acidic residues).

The protein belongs to the bacterial ribosomal protein bS6 family.

Its function is as follows. Binds together with bS18 to 16S ribosomal RNA. The polypeptide is Small ribosomal subunit protein bS6 (Granulibacter bethesdensis (strain ATCC BAA-1260 / CGDNIH1)).